Here is an 851-residue protein sequence, read N- to C-terminus: ATP-dependent DNA helicase DDX31 (851 aa).

The tract at residues 1–196 (MAPDLASQRH…STSDRNQEER (196 aa)) is disordered. Residues 230–259 (AAFHELGLHPHLISTINTVLKMSSMTSVQK) carry the Q motif motif. The Helicase ATP-binding domain occupies 262–443 (IPVLLEGRDA…DISLHDPVSI (182 aa)). ATP is bound at residue 275-282 (SQTGSGKT). The DEAD box motif lies at 388 to 391 (DEAD). In terms of domain architecture, Helicase C-terminal spans 480 to 659 (SLKQHVTVVP…VSEIKMEDIL (180 aa)). 2 disordered regions span residues 762 to 784 (KKRK…HSLA) and 804 to 851 (KQNA…SQKV). Arginine 828 carries the omega-N-methylarginine modification. Over residues 841 to 851 (VQRDSKTSQKV) the composition is skewed to basic and acidic residues.

It belongs to the DEAD box helicase family. DDX31/DBP7 subfamily. In terms of assembly, interacts with NPM1; this interaction prevents interaction between NPM1 and HDM2. As to expression, weakly or undetectably expressed in normal organs. Up-regulated in renal cell carcinoma.

The protein resides in the nucleus. It localises to the nucleolus. The catalysed reaction is ATP + H2O = ADP + phosphate + H(+). Its function is as follows. May have DNA helicase activity and RNA helicase activity. Probably have ssDNA and RNA dependent ATPase activity. Plays a role in ribosome biogenesis and TP53/p53 regulation through its interaction with NPM1. This chain is ATP-dependent DNA helicase DDX31, found in Homo sapiens (Human).